Reading from the N-terminus, the 484-residue chain is Malonate-semialdehyde dehydrogenase 3 (484 aa).

F152, K176, E179, R180, and S229 together coordinate NAD(+). The active-site Nucleophile is C284. E384 lines the NAD(+) pocket.

Belongs to the aldehyde dehydrogenase family. IolA subfamily. Homotetramer.

The enzyme catalyses 3-oxopropanoate + NAD(+) + CoA + H2O = hydrogencarbonate + acetyl-CoA + NADH + H(+). The catalysed reaction is 2-methyl-3-oxopropanoate + NAD(+) + CoA + H2O = propanoyl-CoA + hydrogencarbonate + NADH + H(+). The protein operates within polyol metabolism; myo-inositol degradation into acetyl-CoA; acetyl-CoA from myo-inositol: step 7/7. Catalyzes the oxidation of malonate semialdehyde (MSA) and methylmalonate semialdehyde (MMSA) into acetyl-CoA and propanoyl-CoA, respectively. Is involved in a myo-inositol catabolic pathway. Bicarbonate, and not CO2, is the end-product of the enzymatic reaction. The chain is Malonate-semialdehyde dehydrogenase 3 from Geobacillus kaustophilus (strain HTA426).